Consider the following 519-residue polypeptide: ATP synthase subunit alpha (519 aa).

Residue 174–181 (GDRQTGKT) participates in ATP binding.

It belongs to the ATPase alpha/beta chains family. F-type ATPases have 2 components, CF(1) - the catalytic core - and CF(0) - the membrane proton channel. CF(1) has five subunits: alpha(3), beta(3), gamma(1), delta(1), epsilon(1). CF(0) has three main subunits: a(1), b(2) and c(9-12). The alpha and beta chains form an alternating ring which encloses part of the gamma chain. CF(1) is attached to CF(0) by a central stalk formed by the gamma and epsilon chains, while a peripheral stalk is formed by the delta and b chains.

The protein resides in the cell inner membrane. The catalysed reaction is ATP + H2O + 4 H(+)(in) = ADP + phosphate + 5 H(+)(out). Functionally, produces ATP from ADP in the presence of a proton gradient across the membrane. The alpha chain is a regulatory subunit. This is ATP synthase subunit alpha from Paracidovorax citrulli (strain AAC00-1) (Acidovorax citrulli).